The chain runs to 220 residues: Octanoyltransferase (220 aa).

One can recognise a BPL/LPL catalytic domain in the interval 29 to 217 (GRAPEMIWLL…CFEETFGPLP (189 aa)). Substrate contacts are provided by residues 68–75 (RGGQYTYH), 148–150 (AIG), and 161–163 (GLS). Cys179 functions as the Acyl-thioester intermediate in the catalytic mechanism.

The protein belongs to the LipB family.

The protein localises to the cytoplasm. The enzyme catalyses octanoyl-[ACP] + L-lysyl-[protein] = N(6)-octanoyl-L-lysyl-[protein] + holo-[ACP] + H(+). Its pathway is protein modification; protein lipoylation via endogenous pathway; protein N(6)-(lipoyl)lysine from octanoyl-[acyl-carrier-protein]: step 1/2. Functionally, catalyzes the transfer of endogenously produced octanoic acid from octanoyl-acyl-carrier-protein onto the lipoyl domains of lipoate-dependent enzymes. Lipoyl-ACP can also act as a substrate although octanoyl-ACP is likely to be the physiological substrate. This is Octanoyltransferase from Dinoroseobacter shibae (strain DSM 16493 / NCIMB 14021 / DFL 12).